Here is a 269-residue protein sequence, read N- to C-terminus: MVRIAIAGAAGRMGRNLVKASHLNPEASVTAGSERPESSLVGVDVGELCGEGKFDVFLTDDLTKEVDNFDVVIDFTAPVSTLANLELCKQHGKSIIIGTTGFSEEERELIDEAAKQVPVVMAPNYSVGVNLVFKLLEKAAKVMGDYCDIEIVEAHHRHKVDAPSGTAIGMGEAIAGAMGNKLSDVAVYAREGITGERTKDEIGFATIRAGDIVGEHTAMFADIGERVEITHKATDRMTFANGAVKAAVWLHSKPAGFYTMTDVLGLNEL.

NAD(+) contacts are provided by residues 8-13 (GAAGRM) and E34. An NADP(+)-binding site is contributed by R35. Residues 98-100 (GTT) and 122-125 (APNY) each bind NAD(+). H155 functions as the Proton donor/acceptor in the catalytic mechanism. Residue H156 coordinates (S)-2,3,4,5-tetrahydrodipicolinate. K159 serves as the catalytic Proton donor. (S)-2,3,4,5-tetrahydrodipicolinate is bound at residue 165 to 166 (GT).

Belongs to the DapB family.

The protein resides in the cytoplasm. The catalysed reaction is (S)-2,3,4,5-tetrahydrodipicolinate + NAD(+) + H2O = (2S,4S)-4-hydroxy-2,3,4,5-tetrahydrodipicolinate + NADH + H(+). It catalyses the reaction (S)-2,3,4,5-tetrahydrodipicolinate + NADP(+) + H2O = (2S,4S)-4-hydroxy-2,3,4,5-tetrahydrodipicolinate + NADPH + H(+). Its pathway is amino-acid biosynthesis; L-lysine biosynthesis via DAP pathway; (S)-tetrahydrodipicolinate from L-aspartate: step 4/4. Functionally, catalyzes the conversion of 4-hydroxy-tetrahydrodipicolinate (HTPA) to tetrahydrodipicolinate. This is 4-hydroxy-tetrahydrodipicolinate reductase from Vibrio campbellii (strain ATCC BAA-1116).